Consider the following 147-residue polypeptide: Cilia- and flagella-associated protein 90 (147 aa).

Residues 1-36 (MEDDEEETTASTLRGKPRPPPVSAQSAFSYIPPRRL) are disordered.

In terms of assembly, microtubule inner protein component of sperm flagellar doublet microtubules.

It is found in the cytoplasm. The protein localises to the cytoskeleton. The protein resides in the cilium axoneme. It localises to the flagellum axoneme. Microtubule inner protein (MIP) part of the dynein-decorated doublet microtubules (DMTs) in cilia axoneme, which is required for motile cilia beating. In Homo sapiens (Human), this protein is Cilia- and flagella-associated protein 90.